Reading from the N-terminus, the 141-residue chain is Large ribosomal subunit protein uL11 (141 aa).

The protein belongs to the universal ribosomal protein uL11 family. As to quaternary structure, part of the ribosomal stalk of the 50S ribosomal subunit. Interacts with L10 and the large rRNA to form the base of the stalk. L10 forms an elongated spine to which L12 dimers bind in a sequential fashion forming a multimeric L10(L12)X complex. One or more lysine residues are methylated.

Functionally, forms part of the ribosomal stalk which helps the ribosome interact with GTP-bound translation factors. This is Large ribosomal subunit protein uL11 from Dinoroseobacter shibae (strain DSM 16493 / NCIMB 14021 / DFL 12).